A 255-amino-acid polypeptide reads, in one-letter code: Ras-like protein family member 12 (255 aa).

GTP contacts are provided by residues 30 to 37 (GAMGSGKS), 77 to 81 (DTADQ), and 137 to 140 (NKVD).

This sequence belongs to the small GTPase superfamily. Ras family.

The catalysed reaction is GTP + H2O = GDP + phosphate + H(+). This Danio rerio (Zebrafish) protein is Ras-like protein family member 12 (RASL12).